The sequence spans 154 residues: Snaclec agglucetin subunit alpha-1 (154 aa).

A signal peptide spans 1–23 (MGRFIFVSFGLLVVFLSLSGTGA). 3 disulfide bridges follow: C27–C38, C55–C150, and C125–C142. The 118-residue stretch at 34–151 (YDQSCYRVFK…CGSEYAFVCK (118 aa)) folds into the C-type lectin domain. N116 is a glycosylation site (N-linked (GlcNAc...) asparagine).

Belongs to the snaclec family. In terms of assembly, heterotetramer of the subunits alpha-1, alpha-2, beta-1 and beta-2; disulfide-linked. As to expression, expressed by the venom gland.

The protein localises to the secreted. In terms of biological role, agglucetin specifically causes platelet aggregation and surface exposure of integrin alpha-IIb/beta-3 with a GPIb-(GP1BA-) dependent manner in washed platelets. It binds to human platelets in a saturable manner, and its binding is specifically blocked by anti-GP Ib mAb. It regulates endothelial cell survival and promotes angiogenesis by activating integrin alpha-v/beta-3 signaling through FAK/phosphatidylinositol 3-kinase (PI3K)/Akt pathway. This is Snaclec agglucetin subunit alpha-1 from Deinagkistrodon acutus (Hundred-pace snake).